Reading from the N-terminus, the 263-residue chain is Protein M1425_2021 (263 aa).

The protein belongs to the CinA family.

The polypeptide is Protein M1425_2021 (Saccharolobus islandicus (strain M.14.25 / Kamchatka #1) (Sulfolobus islandicus)).